The chain runs to 513 residues: Ribonuclease Y (513 aa).

A helical membrane pass occupies residues 4–24; it reads TTSLIIAILAGILGIVIGFFF. The segment at 78–106 is disordered; that stretch reads KSRLKEISRQEDRLNSKEENLERKNASLE. One can recognise a KH domain in the interval 203 to 288; it reads TVSVVNLPND…EMVEKARKDV (86 aa). Residues 329–422 enclose the HD domain; the sequence is VLKHSIEVSN…VQSADAISAA (94 aa).

Belongs to the RNase Y family.

The protein localises to the cell membrane. Functionally, endoribonuclease that initiates mRNA decay. This chain is Ribonuclease Y, found in Finegoldia magna (strain ATCC 29328 / DSM 20472 / WAL 2508) (Peptostreptococcus magnus).